We begin with the raw amino-acid sequence, 175 residues long: MKVMERWFNVGKIVNTHGIRGEVRVISRTDFPEERYKKGNKLYIFRECDTEPIEVTVKSHRVHKSFDLLSFEGYDSINDVEPFKGAMLKVPESQLGELNEGEYYFHEIIDCTVVTEAGETIGKVKEILTPGANDVWVVRRQDGTDALIPYIDDVVMHVDPERKIIIIRPMEGLLE.

The 74-residue stretch at 100 to 173 (EGEYYFHEII…IIIIRPMEGL (74 aa)) folds into the PRC barrel domain.

The protein belongs to the RimM family. Binds ribosomal protein uS19.

The protein resides in the cytoplasm. An accessory protein needed during the final step in the assembly of 30S ribosomal subunit, possibly for assembly of the head region. Essential for efficient processing of 16S rRNA. May be needed both before and after RbfA during the maturation of 16S rRNA. It has affinity for free ribosomal 30S subunits but not for 70S ribosomes. This chain is Ribosome maturation factor RimM, found in Geobacillus thermodenitrificans (strain NG80-2).